The chain runs to 429 residues: Enolase (429 aa).

Glutamine 165 serves as a coordination point for (2R)-2-phosphoglycerate. Catalysis depends on glutamate 207, which acts as the Proton donor. The Mg(2+) site is built by aspartate 244, glutamate 287, and aspartate 314. (2R)-2-phosphoglycerate-binding residues include lysine 339, arginine 368, serine 369, and lysine 390. Residue lysine 339 is the Proton acceptor of the active site.

Belongs to the enolase family. Mg(2+) is required as a cofactor.

It is found in the cytoplasm. It localises to the secreted. The protein localises to the cell surface. It carries out the reaction (2R)-2-phosphoglycerate = phosphoenolpyruvate + H2O. It participates in carbohydrate degradation; glycolysis; pyruvate from D-glyceraldehyde 3-phosphate: step 4/5. Functionally, catalyzes the reversible conversion of 2-phosphoglycerate (2-PG) into phosphoenolpyruvate (PEP). It is essential for the degradation of carbohydrates via glycolysis. This is Enolase from Roseiflexus castenholzii (strain DSM 13941 / HLO8).